A 1039-amino-acid chain; its full sequence is Protein male-specific lethal-1 (1039 aa).

Residues 1-13 are compositionally biased toward basic residues; sequence MDKRFKWPPKKRA. Disordered stretches follow at residues 1–44 and 171–199; these read MDKR…HLHQ and RRKN…QKLI. A Phosphoserine modification is found at Ser18. Ser238 carries the post-translational modification Phosphoserine. Disordered regions lie at residues 244 to 266, 358 to 454, 485 to 691, and 729 to 799; these read HAGA…GEFN, GQSV…GNQN, KKDK…EIDV, and IYPP…SSTT. Over residues 255 to 266 the composition is skewed to basic and acidic residues; the sequence is KRSESKGRGEFN. Residues 368 to 392 are compositionally biased toward acidic residues; that stretch reads EEDDDEDDEDDENSDKDDDSEEDDY. The segment covering 397-407 has biased composition (basic and acidic residues); it reads SDADVNARTEE. Positions 431–445 are enriched in polar residues; the sequence is AHSTPNHQQKSSTQA. Ser433 bears the Phosphoserine mark. Thr434 is subject to Phosphothreonine. Residues Ser492 and Ser496 each carry the phosphoserine modification. 2 stretches are compositionally biased toward basic and acidic residues: residues 504-515 and 523-570; these read PHQEDAIVDHNA and PKPD…DAPK. Polar residues-rich tracts occupy residues 581-592 and 609-625; these read TKTSSRESTLPK and NHQS…TQRL. Ser585 carries the phosphoserine modification. At Thr659 the chain carries Phosphothreonine. Ser682 and Ser684 each carry phosphoserine. Thr747 carries the post-translational modification Phosphothreonine. Ser749 is modified (phosphoserine). Residues Thr750, Thr751, and Thr753 each carry the phosphothreonine modification. The segment covering 759 to 768 has biased composition (polar residues); that stretch reads QHAVTSSMDQ. A phosphoserine mark is found at Ser764 and Ser765. At Thr788 the chain carries Phosphothreonine. Ser810 is subject to Phosphoserine. Phosphothreonine is present on residues Thr813 and Thr832. The 119-residue stretch at 865–983 folds into the PEHE domain; sequence SLEIPKWRDV…EARDDFGVPW (119 aa). Ser879 and Ser889 each carry phosphoserine. The interaction with mof HAT domain stretch occupies residues 886-904; sequence ELLSDATFERRHQKYVKDE. A disordered region spans residues 1011-1039; the sequence is IPTTAAEARHQENHSSYVFPKRRKRQKNR. Thr1014 bears the Phosphothreonine mark. Ser1025 bears the Phosphoserine mark. A compositionally biased stretch (basic residues) spans 1030 to 1039; sequence PKRRKRQKNR. Residues 1032–1037 carry the Nuclear localization signal motif; that stretch reads RRKRQK.

The protein belongs to the msl-1 family. Component of the male-specific lethal (MSL) histone acetyltransferase complex, composed of mof, mle, msl-1, msl-2 and msl-3 proteins, as well as roX1 and roX2 non-coding RNAs. Interacts (via PEHE domain) with mof (via HAT domain) and msl-3 (via MRG domain); both interactions are direct. Interacts with tamo via the nuclear localization signal. Component of a maternal MSL subcomplex composed of mof, msl-1 and msl-3. Post-translationally, phosphorylation at Ser-18, Thr743, Thr-747 and Thr-751 is required to promote phosphorylation of 'Ser-5' of the C-terminal heptapeptide repeat domain (CTD) of the largest RNA polymerase II subunit Polr2A. Phosphorylated by Cdk7 in vitro. In contrast, phosphorylation at Ser-18, Thr743, Thr-747 and Thr-751 does not affect its role in dosage compensation in males. Ubiquitinated by msl-2.

It is found in the nucleus. Its subcellular location is the chromosome. In terms of biological role, component of the male-specific lethal (MSL) histone acetyltransferase complex, a multiprotein complex essential for elevating transcription of the single X chromosome in the male (X chromosome dosage compensation). The MSL complex specifically associates with the single X chromosome in males and mediates formation of H4K16ac, promoting a two-fold activation of X chromosome. In complex with msl-2, promotes ubiquitination of histone H2B. In addition to its role in dosage compensation in males, regulates the activity of gene promoters: acts together with Cdk7 to promote phosphorylation of 'Ser-5' of the C-terminal heptapeptide repeat domain (CTD) of the largest RNA polymerase II subunit Polr2A. The sequence is that of Protein male-specific lethal-1 from Drosophila melanogaster (Fruit fly).